The sequence spans 242 residues: Glucosamine-6-phosphate deaminase (242 aa).

Aspartate 67 acts as the Proton acceptor; for enolization step in catalysis. Catalysis depends on asparagine 136, which acts as the For ring-opening step. Histidine 138 serves as the catalytic Proton acceptor; for ring-opening step. Catalysis depends on glutamate 143, which acts as the For ring-opening step.

It belongs to the glucosamine/galactosamine-6-phosphate isomerase family. NagB subfamily.

It carries out the reaction alpha-D-glucosamine 6-phosphate + H2O = beta-D-fructose 6-phosphate + NH4(+). The protein operates within amino-sugar metabolism; N-acetylneuraminate degradation; D-fructose 6-phosphate from N-acetylneuraminate: step 5/5. Functionally, catalyzes the reversible isomerization-deamination of glucosamine 6-phosphate (GlcN6P) to form fructose 6-phosphate (Fru6P) and ammonium ion. This chain is Glucosamine-6-phosphate deaminase, found in Clostridium perfringens (strain SM101 / Type A).